Here is a 145-residue protein sequence, read N- to C-terminus: Small ribosomal subunit protein uS17c (145 aa).

A chloroplast-targeting transit peptide spans 1 to 36; sequence MLLTTPFVSSPVRVQGNGGSGASPWAGAATALRIQA. Residues 101-145 form a disordered region; the sequence is KTKHFLAVPLPPRDTRRKSQLLPPLQSQSQSQDQDQPPTPPPSSD. A compositionally biased stretch (low complexity) spans 120-136; the sequence is QLLPPLQSQSQSQDQDQ.

It belongs to the universal ribosomal protein uS17 family. As to quaternary structure, part of the 30S ribosomal subunit.

The protein localises to the plastid. It is found in the chloroplast. One of the primary rRNA binding proteins, it binds specifically to the 5'-end of 16S ribosomal RNA. This chain is Small ribosomal subunit protein uS17c (RPS17), found in Oryza sativa subsp. japonica (Rice).